A 1352-amino-acid chain; its full sequence is Astrotactin-2 (1352 aa).

Positions Met-1–Pro-31 are disordered. The N-terminal stretch at Met-1–Ala-51 is a signal peptide. The Lumenal portion of the chain corresponds to Gly-52–His-218. N-linked (GlcNAc...) asparagine glycosylation is present at Asn-180. Residues Ile-219 to Leu-239 traverse the membrane as a helical segment. The Cytoplasmic segment spans residues Tyr-240–Lys-447. 2 disordered regions span residues Glu-308–Gly-327 and Thr-375–Glu-421. Positions Gln-383–Ala-392 are enriched in polar residues. Residues Thr-448–Met-468 traverse the membrane as a helical segment. Over Ser-469–Arg-1352 the chain is Lumenal. 3 EGF-like domains span residues Val-523–Val-563, Pro-664–Tyr-708, and Lys-712–Leu-764. 9 disulfides stabilise this stretch: Cys-527-Cys-539, Cys-535-Cys-546, Cys-548-Cys-562, Cys-668-Cys-681, Cys-675-Cys-692, Cys-694-Cys-707, Cys-716-Cys-728, Cys-724-Cys-748, and Cys-750-Cys-763. N-linked (GlcNAc...) asparagine glycosylation occurs at Asn-796. Cystine bridges form between Cys-838–Cys-1000, Cys-929–Cys-990, and Cys-996–Cys-1003. An N-linked (GlcNAc...) asparagine glycan is attached at Asn-1033. 5 disulfide bridges follow: Cys-1049–Cys-1060, Cys-1062–Cys-1075, Cys-1149–Cys-1171, Cys-1203–Cys-1290, and Cys-1311–Cys-1334. In terms of domain architecture, Fibronectin type-III spans Pro-1079 to Thr-1201.

Belongs to the astrotactin family. In terms of assembly, interacts with ASTN1; the interaction is not calcium-dependent. As to expression, detected in cerebellum granule neurons; not detected in astroglia (at protein level). Detected primarily in cerebellum, and at lower levels in brain cortex, olfactory bulb, hindbrain and hippocampus dentate gyrus. Between 6 and 10 days after birth, when granule cell migration occurs in the cerebellum, detected in granule cell precursors in the external germinal layer, the molecular layer, the internal granule layer and in Purkinje neurons. Detected in postmitotic neurons in adult cerebellum.

It localises to the membrane. The protein resides in the perikaryon. Its subcellular location is the cytoplasm. It is found in the cell cortex. The protein localises to the early endosome. It localises to the late endosome. The protein resides in the cytoplasmic vesicle. Its subcellular location is the clathrin-coated vesicle. Functionally, mediates recycling of the neuronal cell adhesion molecule ASTN1 to the anterior pole of the cell membrane in migrating neurons. Promotes ASTN1 internalization and intracellular transport of endocytosed ASTN1. Selectively binds inositol-4,5-bisphosphate, inositol-3,4,5-trisphosphate and inositol-1,3,4,5-tetrakisphosphate, suggesting it is recruited to membranes that contain lipids with a phosphoinositide headgroup. The sequence is that of Astrotactin-2 (Astn2) from Mus musculus (Mouse).